A 186-amino-acid chain; its full sequence is Peptidyl-tRNA hydrolase (186 aa).

Residue tyrosine 13 participates in tRNA binding. Histidine 18 serves as the catalytic Proton acceptor. TRNA is bound by residues tyrosine 59, asparagine 61, and asparagine 107.

This sequence belongs to the PTH family. Monomer.

The protein resides in the cytoplasm. The catalysed reaction is an N-acyl-L-alpha-aminoacyl-tRNA + H2O = an N-acyl-L-amino acid + a tRNA + H(+). Functionally, hydrolyzes ribosome-free peptidyl-tRNAs (with 1 or more amino acids incorporated), which drop off the ribosome during protein synthesis, or as a result of ribosome stalling. In terms of biological role, catalyzes the release of premature peptidyl moieties from peptidyl-tRNA molecules trapped in stalled 50S ribosomal subunits, and thus maintains levels of free tRNAs and 50S ribosomes. This chain is Peptidyl-tRNA hydrolase, found in Thermotoga maritima (strain ATCC 43589 / DSM 3109 / JCM 10099 / NBRC 100826 / MSB8).